Here is a 492-residue protein sequence, read N- to C-terminus: Glutamyl-tRNA(Gln) amidotransferase subunit A (492 aa).

Active-site charge relay system residues include lysine 78 and serine 158. The Acyl-ester intermediate role is filled by serine 182.

Belongs to the amidase family. GatA subfamily. As to quaternary structure, heterotrimer of A, B and C subunits.

The catalysed reaction is L-glutamyl-tRNA(Gln) + L-glutamine + ATP + H2O = L-glutaminyl-tRNA(Gln) + L-glutamate + ADP + phosphate + H(+). Its function is as follows. Allows the formation of correctly charged Gln-tRNA(Gln) through the transamidation of misacylated Glu-tRNA(Gln) in organisms which lack glutaminyl-tRNA synthetase. The reaction takes place in the presence of glutamine and ATP through an activated gamma-phospho-Glu-tRNA(Gln). The protein is Glutamyl-tRNA(Gln) amidotransferase subunit A of Parvibaculum lavamentivorans (strain DS-1 / DSM 13023 / NCIMB 13966).